Reading from the N-terminus, the 131-residue chain is Small ribosomal subunit protein uS8 (131 aa).

Belongs to the universal ribosomal protein uS8 family. Part of the 30S ribosomal subunit. Contacts proteins S5 and S12.

Its function is as follows. One of the primary rRNA binding proteins, it binds directly to 16S rRNA central domain where it helps coordinate assembly of the platform of the 30S subunit. This is Small ribosomal subunit protein uS8 from Nautilia profundicola (strain ATCC BAA-1463 / DSM 18972 / AmH).